A 379-amino-acid chain; its full sequence is Succinate--CoA ligase [ADP-forming] subunit beta (379 aa).

The 229-residue stretch at 9–237 (RDILARYGIP…SSDEPEAEQR (229 aa)) folds into the ATP-grasp domain. Residues K45, 52 to 54 (GRG), I94, and E99 each bind ATP. 2 residues coordinate Mg(2+): N192 and D206. Residues N257 and 314 to 316 (GIT) each bind substrate.

The protein belongs to the succinate/malate CoA ligase beta subunit family. Heterotetramer of two alpha and two beta subunits. The cofactor is Mg(2+).

It carries out the reaction succinate + ATP + CoA = succinyl-CoA + ADP + phosphate. It catalyses the reaction GTP + succinate + CoA = succinyl-CoA + GDP + phosphate. It participates in carbohydrate metabolism; tricarboxylic acid cycle; succinate from succinyl-CoA (ligase route): step 1/1. Functionally, succinyl-CoA synthetase functions in the citric acid cycle (TCA), coupling the hydrolysis of succinyl-CoA to the synthesis of either ATP or GTP and thus represents the only step of substrate-level phosphorylation in the TCA. The beta subunit provides nucleotide specificity of the enzyme and binds the substrate succinate, while the binding sites for coenzyme A and phosphate are found in the alpha subunit. This chain is Succinate--CoA ligase [ADP-forming] subunit beta, found in Roseiflexus sp. (strain RS-1).